Here is a 298-residue protein sequence, read N- to C-terminus: Tyrosine recombinase XerC (298 aa).

The 84-residue stretch at 1-84 folds into the Core-binding (CB) domain; sequence MNHIQEAFLN…TLRTFYEYWM (84 aa). The Tyr recombinase domain occupies 105–286; that stretch reads YLPQFFYEEE…SNQQLRKVYL (182 aa). Residues Arg145, Lys169, His238, Arg241, and His264 contribute to the active site. The active-site O-(3'-phospho-DNA)-tyrosine intermediate is Tyr273.

Belongs to the 'phage' integrase family. XerC subfamily. As to quaternary structure, forms a cyclic heterotetrameric complex composed of two molecules of XerC and two molecules of XerD.

The protein localises to the cytoplasm. Functionally, site-specific tyrosine recombinase, which acts by catalyzing the cutting and rejoining of the recombining DNA molecules. The XerC-XerD complex is essential to convert dimers of the bacterial chromosome into monomers to permit their segregation at cell division. It also contributes to the segregational stability of plasmids. This chain is Tyrosine recombinase XerC, found in Staphylococcus aureus (strain MRSA252).